Reading from the N-terminus, the 49-residue chain is Photosystem II reaction center protein K (49 aa).

A propeptide spanning residues 1 to 12 (MISSIHLRKLLG) is cleaved from the precursor. A helical membrane pass occupies residues 24–44 (IIDVLPIIPVLFLLLAFVWQA).

Belongs to the PsbK family. In terms of assembly, PSII is composed of 1 copy each of membrane proteins PsbA, PsbB, PsbC, PsbD, PsbE, PsbF, PsbH, PsbI, PsbJ, PsbK, PsbL, PsbM, PsbT, PsbX, PsbY, PsbZ, Psb30/Ycf12, at least 3 peripheral proteins of the oxygen-evolving complex and a large number of cofactors. It forms dimeric complexes.

Its subcellular location is the plastid. It localises to the chloroplast thylakoid membrane. Its function is as follows. One of the components of the core complex of photosystem II (PSII). PSII is a light-driven water:plastoquinone oxidoreductase that uses light energy to abstract electrons from H(2)O, generating O(2) and a proton gradient subsequently used for ATP formation. It consists of a core antenna complex that captures photons, and an electron transfer chain that converts photonic excitation into a charge separation. The protein is Photosystem II reaction center protein K of Phacus acuminatus.